Reading from the N-terminus, the 167-residue chain is UPF0178 protein bll3966 (167 aa).

Belongs to the UPF0178 family.

The protein is UPF0178 protein bll3966 of Bradyrhizobium diazoefficiens (strain JCM 10833 / BCRC 13528 / IAM 13628 / NBRC 14792 / USDA 110).